A 209-amino-acid chain; its full sequence is Uracil phosphoribosyltransferase (209 aa).

5-phospho-alpha-D-ribose 1-diphosphate contacts are provided by residues arginine 79, arginine 104, and 131–139 (DPMLATGGS). Uracil-binding positions include isoleucine 194 and 199–201 (GDA). Position 200 (aspartate 200) interacts with 5-phospho-alpha-D-ribose 1-diphosphate.

This sequence belongs to the UPRTase family. It depends on Mg(2+) as a cofactor.

It carries out the reaction UMP + diphosphate = 5-phospho-alpha-D-ribose 1-diphosphate + uracil. The protein operates within pyrimidine metabolism; UMP biosynthesis via salvage pathway; UMP from uracil: step 1/1. Its activity is regulated as follows. Allosterically activated by GTP. Its function is as follows. Catalyzes the conversion of uracil and 5-phospho-alpha-D-ribose 1-diphosphate (PRPP) to UMP and diphosphate. The sequence is that of Uracil phosphoribosyltransferase from Anoxybacillus flavithermus (strain DSM 21510 / WK1).